Consider the following 367-residue polypeptide: Serine/threonine-protein kinase-transforming protein Rmil (367 aa).

The interval 1-64 (EGGSTAGLSA…DSSDDWEIPD (64 aa)) is disordered. Basic and acidic residues predominate over residues 33-57 (QRERKSSSSSEDRNRMKTLGRRDSS). Residues 67–327 (ITVGQRIGSG…PQILASIELL (261 aa)) form the Protein kinase domain. Residues 73–81 (IGSGSFGTV) and Lys93 each bind ATP. The Proton acceptor role is filled by Asp186.

This sequence belongs to the protein kinase superfamily. TKL Ser/Thr protein kinase family. RAF subfamily.

The enzyme catalyses L-seryl-[protein] + ATP = O-phospho-L-seryl-[protein] + ADP + H(+). It catalyses the reaction L-threonyl-[protein] + ATP = O-phospho-L-threonyl-[protein] + ADP + H(+). The polypeptide is Serine/threonine-protein kinase-transforming protein Rmil (V-RMIL) (Avian retrovirus IC10).